We begin with the raw amino-acid sequence, 460 residues long: Elongation factor 1-alpha (460 aa).

N,N,N-trimethylglycine is present on Gly2. Lys3 is modified (N6,N6-dimethyllysine; alternate). The residue at position 3 (Lys3) is an N6-methyllysine; alternate. The tr-type G domain occupies 5-240; that stretch reads KLHVNVVVIG…DAIEPPVRPS (236 aa). The segment at 14–21 is G1; it reads GHVDSGKS. 14 to 21 provides a ligand contact to GTP; it reads GHVDSGKS. Lys30 is modified (N6-methyllysine). A G2 region spans residues 70–74; it reads GITID. At Lys79 the chain carries N6,N6,N6-trimethyllysine. The tract at residues 91-94 is G3; that stretch reads DAPG. Residues 91–95 and 153–156 each bind GTP; these read DAPGH and NKMD. A G4 region spans residues 153–156; sequence NKMD. The segment at 192–194 is G5; that stretch reads SGW. The residue at position 316 (Lys316) is an N6,N6-dimethyllysine; alternate. Lys316 carries the N6-methyllysine; alternate modification. Lys390 is modified (N6-methyllysine).

It belongs to the TRAFAC class translation factor GTPase superfamily. Classic translation factor GTPase family. EF-Tu/EF-1A subfamily.

The protein resides in the cytoplasm. This protein promotes the GTP-dependent binding of aminoacyl-tRNA to the A-site of ribosomes during protein biosynthesis. The protein is Elongation factor 1-alpha (TEF1) of Schizophyllum commune (Split gill fungus).